Here is a 204-residue protein sequence, read N- to C-terminus: LexA repressor (204 aa).

The H-T-H motif DNA-binding region spans arginine 28–lysine 48. Active-site for autocatalytic cleavage activity residues include serine 125 and lysine 162.

This sequence belongs to the peptidase S24 family. In terms of assembly, homodimer.

The enzyme catalyses Hydrolysis of Ala-|-Gly bond in repressor LexA.. In terms of biological role, represses a number of genes involved in the response to DNA damage (SOS response), including recA and lexA. In the presence of single-stranded DNA, RecA interacts with LexA causing an autocatalytic cleavage which disrupts the DNA-binding part of LexA, leading to derepression of the SOS regulon and eventually DNA repair. In Pseudomonas aeruginosa (strain LESB58), this protein is LexA repressor.